The primary structure comprises 296 residues: 4-diphosphocytidyl-2-C-methyl-D-erythritol kinase (296 aa).

K22 is a catalytic residue. 105 to 115 (PMGGGLGGGSS) is a binding site for ATP. The active site involves D147.

This sequence belongs to the GHMP kinase family. IspE subfamily.

The catalysed reaction is 4-CDP-2-C-methyl-D-erythritol + ATP = 4-CDP-2-C-methyl-D-erythritol 2-phosphate + ADP + H(+). It functions in the pathway isoprenoid biosynthesis; isopentenyl diphosphate biosynthesis via DXP pathway; isopentenyl diphosphate from 1-deoxy-D-xylulose 5-phosphate: step 3/6. Functionally, catalyzes the phosphorylation of the position 2 hydroxy group of 4-diphosphocytidyl-2C-methyl-D-erythritol. The protein is 4-diphosphocytidyl-2-C-methyl-D-erythritol kinase of Photobacterium profundum (strain SS9).